Consider the following 466-residue polypeptide: E3 SUMO-protein ligase TRIM60 (466 aa).

The RING-type zinc-finger motif lies at 15–56 (CYICSDFMEDPVTSRCGHNFCFACLRLLWDDLQGNIFCPVCQ). The segment at 91–132 (EEHTVCPKHDQPLVLFCVRDRDVLCTQCSLSVEHQGHYTCPI) adopts a B box-type zinc-finger fold. Zn(2+) contacts are provided by Cys-96, His-99, Cys-118, and His-124. A coiled-coil region spans residues 171–223 (LREEAQYQKIEIRYEIGQIKLFLQSEYEAHLNESHMEELRSFSELNGYLETLL). In terms of domain architecture, B30.2/SPRY spans 272-462 (LSLPAQYSGL…LEILTHPTPD (191 aa)).

Belongs to the TRIM/RBCC family.

E3 SUMO-protein ligase that mediates SUMOylation of TAB2 leading to inhibition of NF-kappa-B and MAPK pathways by suppressing the TRAF6/TAB2/TAK1 complex. The chain is E3 SUMO-protein ligase TRIM60 (Trim60) from Mus musculus (Mouse).